A 914-amino-acid polypeptide reads, in one-letter code: Golgin candidate 6 (914 aa).

Coiled coils occupy residues 723–837 (IEKQ…SLKG) and 863–901 (EDELNDLLVCLGQEESKVEKLSAKLIELGVDVDKLLEDI). Ser-911 bears the Phosphoserine mark.

It localises to the golgi apparatus. Its subcellular location is the golgi stack. Its function is as follows. Golgi matrix protein playing a role in tethering of vesicles to Golgi membranes and in maintaining the overall structure of the Golgi apparatus. Functions in the anterograde transport of storage protein precursors from the endoplasmic reticulum (ER) to the Golgi complex. In Arabidopsis thaliana (Mouse-ear cress), this protein is Golgin candidate 6 (GC6).